The primary structure comprises 337 residues: Probable dihydroorotase (337 aa).

Zn(2+) is bound by residues His-12, His-14, Lys-95, His-132, His-170, and Asp-240. An N6-carboxylysine modification is found at Lys-95.

It belongs to the metallo-dependent hydrolases superfamily. DHOase family. Class II DHOase subfamily. The cofactor is Zn(2+).

The enzyme catalyses (S)-dihydroorotate + H2O = N-carbamoyl-L-aspartate + H(+). It functions in the pathway pyrimidine metabolism; UMP biosynthesis via de novo pathway; (S)-dihydroorotate from bicarbonate: step 3/3. The chain is Probable dihydroorotase (ura2) from Schizosaccharomyces pombe (strain 972 / ATCC 24843) (Fission yeast).